Here is a 416-residue protein sequence, read N- to C-terminus: Adrenocortical dysplasia protein (416 aa).

Residues 11–13 (PWI) carry the PWI motif. Phosphoserine is present on serine 25. The segment at 156 to 245 (ESASSSAGLT…SSTGSSQKAR (90 aa)) is interaction with POT1. The span at 234–251 (ILSSTGSSQKARGTSASP) shows a compositional bias: polar residues. The tract at residues 234–306 (ILSSTGSSQK…TSPPCNSTPS (73 aa)) is disordered. Low complexity predominate over residues 259–272 (SGASVSLLSALATS). Over residues 273–292 (DPGQMDSSQSPPAVGSTSPR) the composition is skewed to polar residues. Residues serine 313 and serine 317 each carry the phosphoserine modification. Lysine 345 participates in a covalent cross-link: Glycyl lysine isopeptide (Lys-Gly) (interchain with G-Cter in SUMO2).

In terms of assembly, component of the shelterin complex (telosome) composed of TERF1, TERF2, TINF2, TERF2IP ACD and POT1. Forms heterodimers with POT1. Identified in a complex with POT1 and single-stranded telomeric DNA. Interacts with STN1 and TINF2. Ubiquitous.

The protein resides in the nucleus. It localises to the chromosome. Its subcellular location is the telomere. Its function is as follows. Component of the shelterin complex (telosome) that is involved in the regulation of telomere length and protection. Shelterin associates with arrays of double-stranded TTAGGG repeats added by telomerase and protects chromosome ends. Without its protective activity, telomeres are no longer hidden from the DNA damage surveillance and chromosome ends are inappropriately processed by DNA repair pathways. Promotes binding of POT1 to single-stranded telomeric DNA. Modulates the inhibitory effects of POT1 on telomere elongation. The ACD-POT1 heterodimer enhances telomere elongation by recruiting telomerase to telomeres and increasing its processivity. May play a role in organogenesis. This Mus musculus (Mouse) protein is Adrenocortical dysplasia protein.